We begin with the raw amino-acid sequence, 475 residues long: Ribulose bisphosphate carboxylase large chain (475 aa).

Residues M1 to S2 constitute a propeptide that is removed on maturation. At P3 the chain carries N-acetylproline. K14 is modified (N6,N6,N6-trimethyllysine). The substrate site is built by N123 and T173. The active-site Proton acceptor is K175. K177 lines the substrate pocket. K201, D203, and E204 together coordinate Mg(2+). The residue at position 201 (K201) is an N6-carboxylysine. Residue H294 is the Proton acceptor of the active site. Positions 295, 327, and 379 each coordinate substrate.

It belongs to the RuBisCO large chain family. Type I subfamily. In terms of assembly, heterohexadecamer of 8 large chains and 8 small chains; disulfide-linked. The disulfide link is formed within the large subunit homodimers. Mg(2+) serves as cofactor. The disulfide bond which can form in the large chain dimeric partners within the hexadecamer appears to be associated with oxidative stress and protein turnover.

It localises to the plastid. It is found in the chloroplast. It carries out the reaction 2 (2R)-3-phosphoglycerate + 2 H(+) = D-ribulose 1,5-bisphosphate + CO2 + H2O. The enzyme catalyses D-ribulose 1,5-bisphosphate + O2 = 2-phosphoglycolate + (2R)-3-phosphoglycerate + 2 H(+). Functionally, ruBisCO catalyzes two reactions: the carboxylation of D-ribulose 1,5-bisphosphate, the primary event in carbon dioxide fixation, as well as the oxidative fragmentation of the pentose substrate in the photorespiration process. Both reactions occur simultaneously and in competition at the same active site. The protein is Ribulose bisphosphate carboxylase large chain of Notothixos subaureus (Golden mistletoe).